A 514-amino-acid polypeptide reads, in one-letter code: ATP synthase subunit alpha (514 aa).

170-177 contributes to the ATP binding site; sequence GDRQTGKT.

This sequence belongs to the ATPase alpha/beta chains family. As to quaternary structure, F-type ATPases have 2 components, CF(1) - the catalytic core - and CF(0) - the membrane proton channel. CF(1) has five subunits: alpha(3), beta(3), gamma(1), delta(1), epsilon(1). CF(0) has three main subunits: a(1), b(2) and c(9-12). The alpha and beta chains form an alternating ring which encloses part of the gamma chain. CF(1) is attached to CF(0) by a central stalk formed by the gamma and epsilon chains, while a peripheral stalk is formed by the delta and b chains.

It is found in the cell inner membrane. The enzyme catalyses ATP + H2O + 4 H(+)(in) = ADP + phosphate + 5 H(+)(out). Functionally, produces ATP from ADP in the presence of a proton gradient across the membrane. The alpha chain is a regulatory subunit. The protein is ATP synthase subunit alpha of Psychrobacter sp. (strain PRwf-1).